The primary structure comprises 480 residues: Proline--tRNA ligase (480 aa).

This sequence belongs to the class-II aminoacyl-tRNA synthetase family. ProS type 3 subfamily. As to quaternary structure, homodimer.

The protein localises to the cytoplasm. It carries out the reaction tRNA(Pro) + L-proline + ATP = L-prolyl-tRNA(Pro) + AMP + diphosphate. Catalyzes the attachment of proline to tRNA(Pro) in a two-step reaction: proline is first activated by ATP to form Pro-AMP and then transferred to the acceptor end of tRNA(Pro). The chain is Proline--tRNA ligase from Mycobacterium leprae (strain Br4923).